A 491-amino-acid polypeptide reads, in one-letter code: Aspartyl/glutamyl-tRNA(Asn/Gln) amidotransferase subunit B (491 aa).

It belongs to the GatB/GatE family. GatB subfamily. Heterotrimer of A, B and C subunits.

The catalysed reaction is L-glutamyl-tRNA(Gln) + L-glutamine + ATP + H2O = L-glutaminyl-tRNA(Gln) + L-glutamate + ADP + phosphate + H(+). It carries out the reaction L-aspartyl-tRNA(Asn) + L-glutamine + ATP + H2O = L-asparaginyl-tRNA(Asn) + L-glutamate + ADP + phosphate + 2 H(+). Its function is as follows. Allows the formation of correctly charged Asn-tRNA(Asn) or Gln-tRNA(Gln) through the transamidation of misacylated Asp-tRNA(Asn) or Glu-tRNA(Gln) in organisms which lack either or both of asparaginyl-tRNA or glutaminyl-tRNA synthetases. The reaction takes place in the presence of glutamine and ATP through an activated phospho-Asp-tRNA(Asn) or phospho-Glu-tRNA(Gln). This is Aspartyl/glutamyl-tRNA(Asn/Gln) amidotransferase subunit B from Prochlorococcus marinus (strain NATL1A).